Consider the following 190-residue polypeptide: Endo-1,4-beta-xylanase (190 aa).

The GH11 domain occupies 1–190; the sequence is QTIGPGTGYS…SSGSASITVS (190 aa). Glutamate 86 functions as the Nucleophile in the catalytic mechanism. Glutamate 177 functions as the Proton donor in the catalytic mechanism.

The protein belongs to the glycosyl hydrolase 11 (cellulase G) family.

It catalyses the reaction Endohydrolysis of (1-&gt;4)-beta-D-xylosidic linkages in xylans.. The protein operates within glycan degradation; xylan degradation. This is Endo-1,4-beta-xylanase from Trichoderma harzianum (Hypocrea lixii).